A 237-amino-acid polypeptide reads, in one-letter code: Homeobox protein Nkx-3.1 (237 aa).

Residues 1–14 (MLRVAEPREPRVEA) show a composition bias toward basic and acidic residues. Disordered regions lie at residues 1–96 (MLRV…EPES) and 108–130 (EHNP…RSRA). The segment covering 24–34 (PTQSKRLTSFL) has biased composition (polar residues). Composition is skewed to basic and acidic residues over residues 38–47 (ILRDRAERHG) and 57–71 (PDPR…DKAG). Residues 125–184 (QKRSRAAFSHTQVIELERKFSHQKYLSAPERAHLAKNLKLTETQVKIWFQNRRYKTKRKQ) constitute a DNA-binding region (homeobox).

The protein belongs to the NK-3 homeobox family. Interacts with serum response factor (SRF). Interacts with SPDEF. Interacts with WDR77. Interacts with TOPORS which polyubiquitinates NKX3-1 and induces its proteasomal degradation. Interacts with FEM1B. Post-translationally, ubiquitinated by TOPORS; monoubiquitinated at several residues and also polyubiquitinated on single residues. Expressed mostly in the male urogenital tract, with highest expression in the epithelial cells lining the ducts of anterior, dorsolateral and ventral prostate and in the bulbourethral gland, and much lower in the seminal vesicle and the testis. Expression in the prostate increases during sexual maturation and is drastically reduced following castration. Expressed also in brain (hippocampus and external granular layer of the cerebral cortex), kidney (intralobular arteries), thymus and adrenal and salivary glands.

It localises to the nucleus. Transcription factor, which binds preferentially the consensus sequence 5'-TAAGT[AG]-3' and can behave as a transcriptional repressor. Plays an important role in normal prostate development, regulating proliferation of glandular epithelium and in the formation of ducts in prostate. Acts as a tumor suppressor controlling prostate carcinogenesis, as shown by the ability to suppress growth and tumorigenicity of prostate carcinoma cells. Plays a role in the formation of minor salivary glands (particularly palatine and lingual glands). This chain is Homeobox protein Nkx-3.1, found in Mus musculus (Mouse).